The chain runs to 433 residues: ATP-dependent protease ATPase subunit HslU (433 aa).

ATP is bound by residues Val18, 60–65 (GVGKTE), Asp246, Glu311, and Arg383.

Belongs to the ClpX chaperone family. HslU subfamily. A double ring-shaped homohexamer of HslV is capped on each side by a ring-shaped HslU homohexamer. The assembly of the HslU/HslV complex is dependent on binding of ATP.

It is found in the cytoplasm. ATPase subunit of a proteasome-like degradation complex; this subunit has chaperone activity. The binding of ATP and its subsequent hydrolysis by HslU are essential for unfolding of protein substrates subsequently hydrolyzed by HslV. HslU recognizes the N-terminal part of its protein substrates and unfolds these before they are guided to HslV for hydrolysis. This chain is ATP-dependent protease ATPase subunit HslU, found in Nitrobacter winogradskyi (strain ATCC 25391 / DSM 10237 / CIP 104748 / NCIMB 11846 / Nb-255).